Reading from the N-terminus, the 1305-residue chain is Serine protease EspC (1305 aa).

A signal peptide spans Met-1–Ala-53. In terms of domain architecture, Peptidase S6 spans Gln-55–Thr-297. Residues His-125, Asp-153, and Ser-256 each act as charge relay system in the active site. One can recognise an Autotransporter domain in the interval Asp-1039–Phe-1305.

Post-translationally, cleaved to release the mature protein from the outer membrane.

Its subcellular location is the periplasm. It is found in the secreted. The protein resides in the cell surface. It localises to the cell outer membrane. Inhibition of cytotoxic activity by phenylmethylsulfonyl fluoride. Serine protease with enterotoxic and cytotoxic activities. Cleaves fodrin, but does not cause its redistribution within epithelial cells. The exact role of EspC in EPEC pathogenesis is still unknown. The chain is Serine protease EspC (espC) from Escherichia coli O127:H6 (strain E2348/69 / EPEC).